Reading from the N-terminus, the 351-residue chain is Ferrochelatase (351 aa).

Fe cation contacts are provided by His-220 and Glu-301.

This sequence belongs to the ferrochelatase family.

Its subcellular location is the cytoplasm. It catalyses the reaction heme b + 2 H(+) = protoporphyrin IX + Fe(2+). It participates in porphyrin-containing compound metabolism; protoheme biosynthesis; protoheme from protoporphyrin-IX: step 1/1. Catalyzes the ferrous insertion into protoporphyrin IX. The protein is Ferrochelatase of Rhodobacter capsulatus (Rhodopseudomonas capsulata).